Here is a 201-residue protein sequence, read N- to C-terminus: Protein CIMAP1C (201 aa).

Residues 171–186 (PAPTMSSRSGHTSPAR) form an STPGR repeat. The segment at 172 to 201 (APTMSSRSGHTSPARLLSPWASSTRPTYAR) is disordered. A compositionally biased stretch (polar residues) spans 191–201 (WASSTRPTYAR).

Belongs to the CIMAP family.

This is Protein CIMAP1C (CIMAP1C) from Bos taurus (Bovine).